The sequence spans 56 residues: Alpha-conotoxin Pn1.2 (56 aa).

An N-terminal signal peptide occupies residues 1–16 (MFTVFLLVVLATTVVS). Residues 17-39 (FTSDRASDGGNAAMSDLIALTIK) constitute a propeptide that is removed on maturation. 2 cysteine pairs are disulfide-bonded: Cys-41-Cys-47 and Cys-42-Cys-55. Residues 43–45 (SHP) form a ser-Xaa-Pro motif, crucial for potent interaction with nAChR region. A Cysteine amide modification is found at Cys-55.

It belongs to the conotoxin A superfamily. In terms of processing, non-native isomers 'ribbon' (with disulfide connectivity C1-C4; C2-C3) and 'beads' (with disulfide connectivity C1-C2; C3-C4) also inhibit high voltage-activated (HVA) calcium channel currents in rat DRG neurons (20-30% inhibition at 1 uM toxin). In terms of tissue distribution, expressed by the venom duct.

It is found in the secreted. Alpha-conotoxins act on postsynaptic membranes, they bind to the nicotinic acetylcholine receptors (nAChR) and thus inhibit them. This toxin inhibits human alpha-7/CHRNA7 and alpha-9-alpha-10/CHRNA9/CHRNA10 AChR (complete inhibition at 3 uM of toxin). In addition, this toxin inhibits high voltage-activated (HVA) calcium channel currents in rat DRG neurons (22% inhibition at 1 uM toxin) probably by activating GABA(B) receptors (GABBR1 and/or GABBR2). This chain is Alpha-conotoxin Pn1.2, found in Conus pennaceus (Feathered cone).